The chain runs to 354 residues: MKKILIIGLGLIGSSIALGIKKAHPEFEILGSDREEVENIAQKRGIIDSKVELVKGAQEADIIILAVPISVTLELLKQIATFDLKDGLLITDAGSTKSEIVELANQLFSGTKVKFIGGHPMAGSHKSGVMAADLNLFENAYYVLTEESQELRELLKGLHAKFIILDAKEHDKVTGQVSHFPHILASTLVWQSDDYAKEHPLVKHLAAGGFRDLTRIAEADSLMWTSVLLSNPEITLERIENFKKHLDEIALKITKRDSQAIEHFFEEGKKIRQAMEIHKGALPNFYDLFISVPDEKGVVLRVLALLQDFSITNIKINEENREDIHGQLQISFKRAEDLQEAREIIEKATDFTVV.

One can recognise a Prephenate/arogenate dehydrogenase domain in the interval 2–283 (KKILIIGLGL…AMEIHKGALP (282 aa)). An NAD(+)-binding site is contributed by 3 to 33 (KILIIGLGLIGSSIALGIKKAHPEFEILGSD). The ACT domain occupies 287 to 354 (DLFISVPDEK…IEKATDFTVV (68 aa)).

Belongs to the prephenate/arogenate dehydrogenase family.

It carries out the reaction prephenate + NAD(+) = 3-(4-hydroxyphenyl)pyruvate + CO2 + NADH. The protein operates within amino-acid biosynthesis; L-tyrosine biosynthesis; (4-hydroxyphenyl)pyruvate from prephenate (NAD(+) route): step 1/1. This chain is Prephenate dehydrogenase (tyrA), found in Lactococcus lactis subsp. cremoris (strain MG1363).